Here is a 74-residue protein sequence, read N- to C-terminus: Large ribosomal subunit protein bL31 (74 aa).

It belongs to the bacterial ribosomal protein bL31 family. Type A subfamily. As to quaternary structure, part of the 50S ribosomal subunit.

In terms of biological role, binds the 23S rRNA. This chain is Large ribosomal subunit protein bL31, found in Chlorobaculum parvum (strain DSM 263 / NCIMB 8327) (Chlorobium vibrioforme subsp. thiosulfatophilum).